The chain runs to 974 residues: Hexokinase-1 (974 aa).

The tract at residues 1-42 is disordered; the sequence is MGWGAPLLSRMLHGPGQAGETSPVPERQSGSENPASEDRRPL. The interval 57 to 66 is mitochondrial-binding peptide (MBP); that stretch reads CQRGQAVDVE. Hexokinase domains lie at 72-514 and 520-962; these read PLTE…MVTA and AEQH…LITA. Residues arginine 86 and 140-145 contribute to the ATP site; that span reads DLGGSS. A hexokinase small subdomain 1 region spans residues 129–263; it reads DGSEKGDFIA…DYDANIVAVV (135 aa). D-glucose 6-phosphate is bound at residue 140–147; the sequence is DLGGSSFR. D-glucose is bound by residues serine 211, 228–229, and 264–265; these read TK and ND. A hexokinase large subdomain 1 region spans residues 264-503; it reads NDTVGTMMTC…SDVRFLLSES (240 aa). Positions 265 and 288 each coordinate D-glucose 6-phosphate. Residues asparagine 291, glutamate 316, and 347–350 each bind D-glucose; that span reads QLFE. Serine 393 carries the phosphoserine modification. 469 to 471 is a D-glucose 6-phosphate binding site; that stretch reads DGS. ATP is bound at residue 481-482; it reads RR. D-glucose 6-phosphate is bound by residues serine 505 and 588-592; that span reads DLGGT. The tract at residues 577-711 is hexokinase small subdomain 2; the sequence is DGTEHGDFLA…EFDLDVVAVV (135 aa). 588–593 contacts ATP; sequence DLGGTN. D-glucose is bound by residues 659-660, 676-677, and 712-713; these read SF, TK, and ND. The hexokinase large subdomain 2 stretch occupies residues 712–951; sequence NDTVGTMMTC…CTVSFLLSED (240 aa). Aspartate 713 and threonine 736 together coordinate D-glucose 6-phosphate. An ATP-binding site is contributed by threonine 736. Residues 738-739, glutamate 764, and glutamate 798 contribute to the D-glucose site; that span reads SN. Residues 803–804, 840–844, and 919–923 each bind ATP; these read GM, TKFLS, and TLYKL. Residues 917-919 and serine 953 each bind D-glucose 6-phosphate; that span reads DGT.

Belongs to the hexokinase family. In terms of assembly, monomer. Interacts with RABL2/RABL2A; binds preferentially to GTP-bound RABL2. Interacts with VDAC1. The HK1-VDAC1 complex interacts with ATF2. Interacts (via N-terminal spermatogenic cell-specific region) with PFKM isoform 2 and isoform 3 (via C-terminus). Interacts with SMAD5. In terms of processing, tyrosine-phosphorylated. In rapidly growing tumor cells exhibiting high glucose catabolic rates, isoform HK1 is markedly elevated. Isoform HK1-SA, isoform HK1-SB and isoform HK1-SC are found only in spermatogenic cells. Isoform HK1-SC is detected in round spermatids, condensing spermatids and mature sperm where it is found in the head membranes, mitochondria of the midpiece and the fibrous sheath of the flagellum. Expressed within the principal piece and midpiece of sperm tail (at protein level).

Its subcellular location is the mitochondrion outer membrane. The protein localises to the cytoplasm. It is found in the cytosol. It localises to the membrane. The enzyme catalyses a D-hexose + ATP = a D-hexose 6-phosphate + ADP + H(+). It catalyses the reaction D-fructose + ATP = D-fructose 6-phosphate + ADP + H(+). The catalysed reaction is D-glucose + ATP = D-glucose 6-phosphate + ADP + H(+). It carries out the reaction D-mannose + ATP = D-mannose 6-phosphate + ADP + H(+). The enzyme catalyses D-glucosamine + ATP = D-glucosamine 6-phosphate + ADP + H(+). It functions in the pathway carbohydrate metabolism; hexose metabolism. Its pathway is carbohydrate degradation; glycolysis; D-glyceraldehyde 3-phosphate and glycerone phosphate from D-glucose: step 1/4. Hexokinase is an allosteric enzyme inhibited by its product D-glucose 6-phosphate. Hexokinase activity is inhibited by N-acetyl-D-glucosamine. Catalyzes the phosphorylation of various hexoses, such as D-glucose, D-glucosamine, D-fructose, D-mannose and 2-deoxy-D-glucose, to hexose 6-phosphate (D-glucose 6-phosphate, D-glucosamine 6-phosphate, D-fructose 6-phosphate, D-mannose 6-phosphate and 2-deoxy-D-glucose 6-phosphate, respectively). Does not phosphorylate N-acetyl-D-glucosamine. Mediates the initial step of glycolysis by catalyzing phosphorylation of D-glucose to D-glucose 6-phosphate. Involved in innate immunity and inflammation by acting as a pattern recognition receptor for bacterial peptidoglycan. When released in the cytosol, N-acetyl-D-glucosamine component of bacterial peptidoglycan inhibits the hexokinase activity of HK1 and causes its dissociation from mitochondrial outer membrane, thereby activating the NLRP3 inflammasome. The sequence is that of Hexokinase-1 from Mus musculus (Mouse).